The sequence spans 601 residues: DNA replication licensing factor MCM3 (601 aa).

Positions 180–386 (PINLLSKSIA…LDRRLSQHVL (207 aa)) constitute an MCM domain. 229–236 (GDPSTAKS) provides a ligand contact to ATP. Positions 361–364 (SRFD) match the Arginine finger motif.

This sequence belongs to the MCM family. Component of the MCM2-7 complex.

The protein localises to the nucleus. Its subcellular location is the chromosome. It is found in the nucleoplasm. It catalyses the reaction ATP + H2O = ADP + phosphate + H(+). Functionally, acts as a component of the MCM2-7 complex (MCM complex) which is the replicative helicase essential for DNA replication initiation and elongation in eukaryotic cells. Required for DNA replication and cell proliferation. The active ATPase sites in the MCM2-7 ring are formed through the interaction surfaces of two neighboring subunits such that a critical structure of a conserved arginine finger motif is provided in trans relative to the ATP-binding site of the Walker A box of the adjacent subunit. The protein is DNA replication licensing factor MCM3 of Entamoeba histolytica (strain ATCC 30459 / HM-1:IMSS / ABRM).